Consider the following 211-residue polypeptide: Thiamine-phosphate synthase (211 aa).

4-amino-2-methyl-5-(diphosphooxymethyl)pyrimidine contacts are provided by residues 37-41 (QLRIK) and asparagine 69. 2 residues coordinate Mg(2+): aspartate 70 and aspartate 89. Residue serine 108 participates in 4-amino-2-methyl-5-(diphosphooxymethyl)pyrimidine binding. Position 134 to 136 (134 to 136 (TQT)) interacts with 2-[(2R,5Z)-2-carboxy-4-methylthiazol-5(2H)-ylidene]ethyl phosphate. Lysine 137 is a 4-amino-2-methyl-5-(diphosphooxymethyl)pyrimidine binding site. Residues glycine 166 and 186 to 187 (VS) each bind 2-[(2R,5Z)-2-carboxy-4-methylthiazol-5(2H)-ylidene]ethyl phosphate.

This sequence belongs to the thiamine-phosphate synthase family. It depends on Mg(2+) as a cofactor.

It catalyses the reaction 2-[(2R,5Z)-2-carboxy-4-methylthiazol-5(2H)-ylidene]ethyl phosphate + 4-amino-2-methyl-5-(diphosphooxymethyl)pyrimidine + 2 H(+) = thiamine phosphate + CO2 + diphosphate. It carries out the reaction 2-(2-carboxy-4-methylthiazol-5-yl)ethyl phosphate + 4-amino-2-methyl-5-(diphosphooxymethyl)pyrimidine + 2 H(+) = thiamine phosphate + CO2 + diphosphate. The enzyme catalyses 4-methyl-5-(2-phosphooxyethyl)-thiazole + 4-amino-2-methyl-5-(diphosphooxymethyl)pyrimidine + H(+) = thiamine phosphate + diphosphate. The protein operates within cofactor biosynthesis; thiamine diphosphate biosynthesis; thiamine phosphate from 4-amino-2-methyl-5-diphosphomethylpyrimidine and 4-methyl-5-(2-phosphoethyl)-thiazole: step 1/1. Its function is as follows. Condenses 4-methyl-5-(beta-hydroxyethyl)thiazole monophosphate (THZ-P) and 2-methyl-4-amino-5-hydroxymethyl pyrimidine pyrophosphate (HMP-PP) to form thiamine monophosphate (TMP). This Salmonella schwarzengrund (strain CVM19633) protein is Thiamine-phosphate synthase.